We begin with the raw amino-acid sequence, 516 residues long: Calcitonin receptor (516 aa).

The N-terminal stretch at 1–24 is a signal peptide; that stretch reads MRFLLLNRFTLLLLLLVSPTPVLQ. The Extracellular segment spans residues 25–146; sequence APTNLTDSGL…FTPDKLHNAY (122 aa). Residues Asn28, Asn73, Asn125, and Asn130 are each glycosylated (N-linked (GlcNAc...) asparagine). Cystine bridges form between Cys55–Cys81, Cys72–Cys112, and Cys95–Cys134. The helical transmembrane segment at 147 to 169 threads the bilayer; sequence VLYYLALVGHSMSIAALIASMGI. The Cytoplasmic portion of the chain corresponds to 170–181; it reads FLFFKNLSCQRV. Residues 182 to 202 form a helical membrane-spanning segment; it reads TLHKNMFLTYILNSIIIIIHL. Residues 203–256 lie on the Extracellular side of the membrane; the sequence is VEVVPNGDLVRRDPMHIFHHNTYMWTMQWELSPPLPLSAHEGKMDPHDSEVISC. Cys256 and Cys326 are oxidised to a cystine. The helical transmembrane segment at 257–279 threads the bilayer; sequence KILHFFHQYMMACNYFWMLCEGI. Residues 280–296 lie on the Cytoplasmic side of the membrane; that stretch reads YLHTLIVMAVFTEDQRL. A helical membrane pass occupies residues 297 to 317; sequence RWYYLLGWGFPIVPTIIHAIT. Topologically, residues 318-333 are extracellular; it reads RAVYYNDNCWLSTETH. A helical transmembrane segment spans residues 334 to 357; that stretch reads LLYIIHGPVMAALVVNFFFLLNIV. Topologically, residues 358-377 are cytoplasmic; that stretch reads RVLVTKMRQTHEAEAYMYLK. The helical transmembrane segment at 378–396 threads the bilayer; it reads AVKATMVLVPLLGIQFVVF. Topologically, residues 397–404 are extracellular; the sequence is PWRPSNKV. The helical transmembrane segment at 405 to 431 threads the bilayer; that stretch reads LGKIYDYLMHSLIHFQGFFVATIYCFC. The Cytoplasmic portion of the chain corresponds to 432 to 516; sequence NHEVQVTLKR…MNVIQQDSSA (85 aa). The disordered stretch occupies residues 489–516; the sequence is RNPPVSNNEGEEGTEMIPMNVIQQDSSA.

It belongs to the G-protein coupled receptor 2 family. As to quaternary structure, heterodimer of CALCR and RAMP1, RAMP2 or RAMP3; the receptor complexes function as AMYR1, AMYR2 and AMYR3 receptors, respectively, and respond to amylin/IAPP, calcitonin/CT and CGRP1 ligands. Interacts with GPRASP2.

Its subcellular location is the cell membrane. Functionally, g protein-coupled receptor activated by ligand peptides amylin (IAPP), calcitonin (CT/CALCA) and calcitonin gene-related peptide type 1 (CGRP1/CALCA). CALCR interacts with receptor-activity-modifying proteins RAMP1, 2 and 3 to form receptor complexes AMYR1, 2 and 3, respectively. IAPP, CT and CGRP1 activate CALCR and AMYRs with distinct modes of receptor activation resulting in specific phenotypes. Ligand binding causes a conformation change that triggers signaling via guanine nucleotide-binding proteins (G proteins) and modulates the activity of downstream effectors. Activates cAMP-dependent pathway. The protein is Calcitonin receptor of Rattus norvegicus (Rat).